The sequence spans 354 residues: MEITAQMVKELRESTGAGMMDCKKALSEADGDMQKAVDILREKGLGQAAKKADRLASEGLVSVEVCEHCKRATISEINSETDFVARNPQFQALTKDTTAHIQAKGITSVEELNESTLNGVKFEEYFKTQIATIGENLVVRRFETISADEKGVVNGYVHSNGRVGVLIGAACQSEEVAQKAAEFIRNLCMHAAAMKPTVISYKDLEKDFVEKEFIALKAELEKENEELKRLGKPLHHIPRFASRSQITPEILAGVENEIKEELKAEGKPEKIWDKIIPGKIERFYADNTILDQRLTLLGQFYVMDDKKTIEQVLAEKSKELGGKIEIVKYVRFELGEGLEKKVDDFAAEVAAQIG.

The interval 81-84 (TDFV) is involved in Mg(2+) ion dislocation from EF-Tu.

It belongs to the EF-Ts family.

The protein resides in the cytoplasm. Its function is as follows. Associates with the EF-Tu.GDP complex and induces the exchange of GDP to GTP. It remains bound to the aminoacyl-tRNA.EF-Tu.GTP complex up to the GTP hydrolysis stage on the ribosome. The polypeptide is Elongation factor Ts (Campylobacter curvus (strain 525.92)).